The sequence spans 351 residues: Protein RecA (351 aa).

Residue 68 to 75 (GPESSGKT) participates in ATP binding.

This sequence belongs to the RecA family.

The protein localises to the cytoplasm. Its function is as follows. Can catalyze the hydrolysis of ATP in the presence of single-stranded DNA, the ATP-dependent uptake of single-stranded DNA by duplex DNA, and the ATP-dependent hybridization of homologous single-stranded DNAs. It interacts with LexA causing its activation and leading to its autocatalytic cleavage. This is Protein RecA from Chloroflexus aggregans (strain MD-66 / DSM 9485).